Reading from the N-terminus, the 217-residue chain is Methylthioribulose-1-phosphate dehydratase (217 aa).

Residues His106 and His108 each contribute to the Zn(2+) site.

Belongs to the aldolase class II family. MtnB subfamily. Requires Zn(2+) as cofactor.

The enzyme catalyses 5-(methylsulfanyl)-D-ribulose 1-phosphate = 5-methylsulfanyl-2,3-dioxopentyl phosphate + H2O. The protein operates within amino-acid biosynthesis; L-methionine biosynthesis via salvage pathway; L-methionine from S-methyl-5-thio-alpha-D-ribose 1-phosphate: step 2/6. Functionally, catalyzes the dehydration of methylthioribulose-1-phosphate (MTRu-1-P) into 2,3-diketo-5-methylthiopentyl-1-phosphate (DK-MTP-1-P). The protein is Methylthioribulose-1-phosphate dehydratase of Xanthomonas euvesicatoria pv. vesicatoria (strain 85-10) (Xanthomonas campestris pv. vesicatoria).